Consider the following 439-residue polypeptide: ATP-dependent RNA helicase SUB2 (439 aa).

Residues M1–I19 are compositionally biased toward acidic residues. The tract at residues M1–S48 is disordered. The segment covering E29–N40 has biased composition (polar residues). A Q motif motif is present at residues T55 to Q83. Positions I86–I261 constitute a Helicase ATP-binding domain. A99–T106 serves as a coordination point for ATP. The DECD box motif lies at D208 to D211. The region spanning G273–S434 is the Helicase C-terminal domain.

It belongs to the DEAD box helicase family. DECD subfamily.

It localises to the nucleus. The enzyme catalyses ATP + H2O = ADP + phosphate + H(+). ATP-binding RNA helicase involved in transcription elongation and required for the export of mRNA out of the nucleus. SUB2 also plays a role in pre-mRNA splicing and spliceosome assembly. May be involved in rDNA and telomeric silencing, and maintenance of genome integrity. In Candida glabrata (strain ATCC 2001 / BCRC 20586 / JCM 3761 / NBRC 0622 / NRRL Y-65 / CBS 138) (Yeast), this protein is ATP-dependent RNA helicase SUB2 (SUB2).